A 1708-amino-acid polypeptide reads, in one-letter code: Clathrin heavy chain 2 (1708 aa).

Residues 1-492 (MAAANAPIAM…VDNDLALKIY (492 aa)) are globular terminal domain. WD40-like repeat stretches follow at residues 25 to 67 (FVTF…RPIT), 68 to 113 (ADSA…MPEQ), 114 to 155 (VVFW…ANLA), 156 to 205 (NNQI…QALE), 206 to 270 (AHAA…PDFQ), 271 to 314 (DDFP…ISPD), and 315 to 343 (PIFLTAESSASGGFYAINRRGQVLHATVN). Residues 462–478 (ENWLAEDKLECSEELGD) are binding site for the uncoating ATPase, involved in lattice disassembly. The segment at 493 to 536 (IKARATPKVVAAFAERREFDKILIYSKQVGYTPDYLFLLQTILR) is flexible linker. A distal segment region spans residues 537-648 (TDPQGAVNFA…RALQHYTELP (112 aa)). Positions 537–1708 (TDPQGAVNFA…AYGMPPMGSY (1172 aa)) are heavy chain arm. CHCR repeat units follow at residues 551–697 (QMEG…QIVV), 700–842 (AKEY…PEDF), 847–986 (ILSV…QLID), 993–1138 (LPES…VSEA), 1142–1283 (FIRA…FRLA), 1288–1434 (LNII…DLIN), and 1437–1580 (LNVL…KECF). The tract at residues 653–1708 (VMVNTHAIEP…AYGMPPMGSY (1056 aa)) is proximal segment. Positions 1227–1536 (AAKIIYAFIS…YIYKKAGRWK (310 aa)) are involved in binding clathrin light chain. The trimerization stretch occupies residues 1564–1708 (SEDLLVYFIE…AYGMPPMGSY (145 aa)).

The protein belongs to the clathrin heavy chain family. Clathrin triskelions, composed of 3 heavy chains and 3 light chains, are the basic subunits of the clathrin coat.

It localises to the cytoplasmic vesicle membrane. It is found in the membrane. Its subcellular location is the coated pit. Its function is as follows. Clathrin is the major protein of the polyhedral coat of coated pits and vesicles. This Oryza sativa subsp. japonica (Rice) protein is Clathrin heavy chain 2.